A 216-amino-acid polypeptide reads, in one-letter code: Protein ADP-ribose pyrophosphatase ORF38 (216 aa).

The Nudix hydrolase domain occupies 1–177; sequence MRNAAGLFMI…DYSNYIEFFD (177 aa). The Nudix box signature appears at 48–70; it reads GHRDCCDAKVYETAVREFVEETG.

It is found in the host cytoplasm. It localises to the host nucleus. The enzyme catalyses ADP-D-ribose + H2O = D-ribose 5-phosphate + AMP + 2 H(+). Its function is as follows. Plays an important role in virus replication most probably through its hydrolyzing ADP-ribose activity in host cells. May function in viral DNA replication or transcription directly, or by removing toxic substances or metabolic intermediates. This is Protein ADP-ribose pyrophosphatase ORF38 from Lepidoptera (butterflies and moths).